The primary structure comprises 486 residues: Histone acetyltransferase type B catalytic subunit DDB_G0274269 (486 aa).

Positions 27–69 form a coiled coil; that stretch reads DIEELKNKDNKENKDKENKAHIKDEGEEEEQKEKKEEEEKEDD. The span at 33–50 shows a compositional bias: basic and acidic residues; it reads NKDNKENKDKENKAHIKD. The segment at 33–78 is disordered; it reads NKDNKENKDKENKAHIKDEGEEEEQKEKKEEEEKEDDGGPISFHPT. Positions 189 to 386 constitute an N-acetyltransferase domain; that stretch reads VVFRYHEKLQ…YRISIKKRLY (198 aa). Acetyl-CoA contacts are provided by residues 260-262 and 267-273; these read YLI and QRMGHGK. The active-site Proton donor/acceptor is glutamate 299. Residues 392–481 are a coiled coil; it reads DSEQIEKIKQ…KNYHKTLSSL (90 aa).

This sequence belongs to the HAT1 family.

It catalyses the reaction L-lysyl-[protein] + acetyl-CoA = N(6)-acetyl-L-lysyl-[protein] + CoA + H(+). The chain is Histone acetyltransferase type B catalytic subunit DDB_G0274269 from Dictyostelium discoideum (Social amoeba).